A 332-amino-acid chain; its full sequence is Ornithine carbamoyltransferase 1, catabolic (332 aa).

Carbamoyl phosphate-binding positions include 56–59 (STRT), glutamine 83, arginine 107, and 134–137 (HPTQ). L-ornithine contacts are provided by residues asparagine 167, aspartate 231, and 235 to 236 (SM). Carbamoyl phosphate contacts are provided by residues 273-274 (CL) and arginine 318.

This sequence belongs to the aspartate/ornithine carbamoyltransferase superfamily. OTCase family.

It localises to the cytoplasm. The enzyme catalyses carbamoyl phosphate + L-ornithine = L-citrulline + phosphate + H(+). It participates in amino-acid degradation; L-arginine degradation via ADI pathway; carbamoyl phosphate from L-arginine: step 2/2. Reversibly catalyzes the transfer of the carbamoyl group from carbamoyl phosphate (CP) to the N(epsilon) atom of ornithine (ORN) to produce L-citrulline. This Streptococcus agalactiae serotype III (strain NEM316) protein is Ornithine carbamoyltransferase 1, catabolic (arcB1).